Consider the following 1118-residue polypeptide: Protein argonaute 1B (1118 aa).

Disordered stretches follow at residues 1–175 (MALQ…SRTV) and 188–246 (APMV…RFPL). A compositionally biased stretch (basic residues) spans 10-24 (PHHHQVPIMVKKKRT). Positions 25–35 (GSGSTGESSGE) are enriched in low complexity. Gly residues-rich tracts occupy residues 54–92 (QHGG…HHPG), 100–110 (GRGGPGSHHPG), and 118–128 (GRGGSGSHHPG). 2 stretches are compositionally biased toward low complexity: residues 148–157 (RGGMPQPYYG) and 193–219 (PTPS…QFQQ). Over residues 220–241 (LATRDQSSTSQAIQIAPPSSKS) the composition is skewed to polar residues. The PAZ domain maps to 457 to 570 (PVIDFVAQLL…LPMEVCKIVE (114 aa)). The region spanning 746-1067 (LLIVILPDNN…AAFRARFYME (322 aa)) is the Piwi domain.

This sequence belongs to the argonaute family. Ago subfamily.

Probably involved in the RNA silencing pathway. May bind to short RNAs such as microRNAs (miRNAs) or short interfering RNAs (siRNAs), and represses the translation of mRNAs which are complementary to them. The chain is Protein argonaute 1B (AGO1B) from Oryza sativa subsp. japonica (Rice).